The following is a 225-amino-acid chain: Two-component response regulator ARR8 (225 aa).

The 136-residue stretch at 10-145 (HVLAVDDSLF…DLTKLKPHMM (136 aa)) folds into the Response regulatory domain. D78 is subject to 4-aspartylphosphate.

This sequence belongs to the ARR family. Type-A subfamily. Two-component system major event consists of a His-to-Asp phosphorelay between a sensor histidine kinase (HK) and a response regulator (RR). In plants, the His-to-Asp phosphorelay involves an additional intermediate named Histidine-containing phosphotransfer protein (HPt). This multistep phosphorelay consists of a His-Asp-His-Asp sequential transfer of a phosphate group between first a His and an Asp of the HK protein, followed by the transfer to a conserved His of the HPt protein and finally the transfer to an Asp in the receiver domain of the RR protein. As to expression, predominantly expressed in roots.

The protein localises to the nucleus. Its function is as follows. Functions as a response regulator involved in His-to-Asp phosphorelay signal transduction system. Phosphorylation of the Asp residue in the receiver domain activates the ability of the protein to promote the transcription of target genes. Type-A response regulators seem to act as negative regulators of the cytokinin signaling. The protein is Two-component response regulator ARR8 (ARR8) of Arabidopsis thaliana (Mouse-ear cress).